The sequence spans 296 residues: Stanniocalcin-2 (296 aa).

The N-terminal stretch at 1 to 24 (MCAERLGQFVTLALVFATLDPARG) is a signal peptide. The interval 22-44 (ARGTDSTNPPEGPQDRGSQQKGR) is disordered. An N-linked (GlcNAc...) asparagine glycan is attached at Asn-73. A disordered region spans residues 236–296 (RPYHRDTDHH…EQSEYSDIRR (61 aa)). Basic and acidic residues predominate over residues 238–258 (YHRDTDHHLTANRGAKGERGS).

This sequence belongs to the stanniocalcin family. Homodimer; disulfide-linked. As to expression, expressed in a variety of tissues. Strongly expressed in ovary and to a lesser extent in kidney.

The protein resides in the secreted. Has an anti-hypocalcemic action on calcium and phosphate homeostasis. The polypeptide is Stanniocalcin-2 (Stc2) (Rattus norvegicus (Rat)).